The following is a 2340-amino-acid chain: Proto-oncogene tyrosine-protein kinase ROS (2340 aa).

Positions 1 to 28 (MKNICWLTLKLVKFVVLGCIIWISVAQS) are cleaved as a signal peptide. Topologically, residues 29–1854 (TVLSSCLTSC…EDGVWITETS (1826 aa)) are extracellular. Asparagine 53 is a glycosylation site (N-linked (GlcNAc...) asparagine). Fibronectin type-III domains are found at residues 111–206 (LPTA…VPET) and 207–295 (APLI…PSPS). N-linked (GlcNAc...) asparagine glycans are attached at residues asparagine 334 and asparagine 362. Residues 567–667 (LPGHPQEVSV…APSVGTTLVP (101 aa)) form the Fibronectin type-III 3 domain. N-linked (GlcNAc...) asparagine glycans are attached at residues asparagine 935 and asparagine 1011. 2 Fibronectin type-III domains span residues 943-1038 (IPDP…SVPS) and 1039-1146 (APEN…TSEI). N-linked (GlcNAc...) asparagine glycosylation occurs at asparagine 1243. Fibronectin type-III domains are found at residues 1442–1549 (ASDM…TKSG), 1550–1649 (VPGA…VNMF), 1651–1744 (TPEK…TKAG), and 1745–1846 (VPSK…LVED). The N-linked (GlcNAc...) asparagine glycan is linked to asparagine 1676. Residues 1855 to 1875 (FILTIIVGIFLVATVPLTFVW) form a helical membrane-spanning segment. The Cytoplasmic portion of the chain corresponds to 1876 to 2340 (HRSLKSHKAS…AHSEHGDVSE (465 aa)). A Protein kinase domain is found at 1938–2216 (LSLRLLLGSG…QLQLFRNVFL (279 aa)). ATP contacts are provided by residues 1944–1952 (LGSGAFGEV) and lysine 1973. Aspartate 2072 serves as the catalytic Proton acceptor. 2 positions are modified to phosphotyrosine; by autocatalysis: tyrosine 2267 and tyrosine 2327.

This sequence belongs to the protein kinase superfamily. Tyr protein kinase family. Insulin receptor subfamily. In terms of assembly, interacts with PTPN11; may activate the PI3 kinase-mTOR signaling pathway. Interacts with VAV3; constitutive interaction mediating VAV3 phosphorylation. Interacts with PTPN6 (via SH2 1 domain); the interaction is direct and promotes ROS1 dephosphorylation. In terms of processing, phosphorylated. Probably autophosphorylates. Phosphorylation at Tyr-2267 and/or Tyr-2327 recruits PTPN11. Phosphorylation at Tyr-2267 is required for the interaction with PTPN6 that mediates ROS1 dephosphorylation. Phosphorylation at Tyr-2267 stimulates the kinase activity and the activation of the ERK1 signaling cascade. In terms of tissue distribution, expressed by epithelial cells of the caput epididymis (at protein level).

The protein localises to the cell membrane. The catalysed reaction is L-tyrosyl-[protein] + ATP = O-phospho-L-tyrosyl-[protein] + ADP + H(+). With respect to regulation, inhibited by dephosphorylation by PTPN6. Functionally, receptor tyrosine kinase (RTK) that plays a role in epithelial cell differentiation and regionalization of the proximal epididymal epithelium. NELL2 is an endogenous ligand for ROS1. Upon endogenous stimulation by NELL2, ROS1 activates the intracellular signaling pathway and triggers epididymal epithelial differentiation and subsequent sperm maturation. May activate several downstream signaling pathways related to cell differentiation, proliferation, growth and survival including the PI3 kinase-mTOR signaling pathway. Mediates the phosphorylation of PTPN11, an activator of this pathway. May also phosphorylate and activate the transcription factor STAT3 to control anchorage-independent cell growth. Mediates the phosphorylation and the activation of VAV3, a guanine nucleotide exchange factor regulating cell morphology. May activate other downstream signaling proteins including AKT1, MAPK1, MAPK3, IRS1, and PLCG2. This Mus musculus (Mouse) protein is Proto-oncogene tyrosine-protein kinase ROS (Ros1).